The primary structure comprises 161 residues: TM2 domain-containing protein DDB_G0278163 (161 aa).

Over 1–24 (MGHHHHHHGGSGHHHHHHHHGSGH) the chain is Cytoplasmic. A helical membrane pass occupies residues 25–45 (YGGGAVLVTPIVTPVPVVYGS). The Extracellular segment spans residues 46 to 54 (RSSSYCPKS). A TM2 domain is found at 52–100 (PKSMTVAYVLWFFFGILGFHRLYLGRVGTFFLYFFTAGVFGLGWLFDAF). Residues 55–75 (MTVAYVLWFFFGILGFHRLYL) traverse the membrane as a helical segment. Residues 76 to 80 (GRVGT) lie on the Cytoplasmic side of the membrane. Residues 81–101 (FFLYFFTAGVFGLGWLFDAFY) traverse the membrane as a helical segment. The Extracellular segment spans residues 102-161 (THKMVKHYNECEFTKSCVGQSPPATIPIYQSEGAYPTYQQVPQQPPQFYQPQQQQPQYQP). The interval 139–161 (YQQVPQQPPQFYQPQQQQPQYQP) is disordered.

Belongs to the TM2 family.

It localises to the membrane. The protein is TM2 domain-containing protein DDB_G0278163 of Dictyostelium discoideum (Social amoeba).